The sequence spans 347 residues: Glycerol-1-phosphate dehydrogenase [NAD(P)+] (347 aa).

NAD(+) contacts are provided by residues Gly-90–Asp-94 and Thr-112–Ser-115. Asp-117 lines the substrate pocket. Residue Ser-121 participates in NAD(+) binding. Asp-165 lines the substrate pocket. Positions 165 and 245 each coordinate Zn(2+). His-249 is a substrate binding site. His-262 serves as a coordination point for Zn(2+).

It belongs to the glycerol-1-phosphate dehydrogenase family. Homodimer. Requires Zn(2+) as cofactor.

It is found in the cytoplasm. It carries out the reaction sn-glycerol 1-phosphate + NAD(+) = dihydroxyacetone phosphate + NADH + H(+). It catalyses the reaction sn-glycerol 1-phosphate + NADP(+) = dihydroxyacetone phosphate + NADPH + H(+). Its pathway is membrane lipid metabolism; glycerophospholipid metabolism. Catalyzes the NAD(P)H-dependent reduction of dihydroxyacetonephosphate (DHAP or glycerone phosphate) to glycerol 1-phosphate (G1P). The G1P thus generated is used as the glycerophosphate backbone of phospholipids in the cellular membranes of Archaea. The sequence is that of Glycerol-1-phosphate dehydrogenase [NAD(P)+] from Thermofilum pendens (strain DSM 2475 / Hrk 5).